The following is a 180-amino-acid chain: MAEEKDKKQSSRRRNNRRTEKESEWQERVVQIRRVTKVVKGGKKLSFRAIVIVGNERGQVGVGVGKASDVIGAVRKGVADGKKHLVNVPLTRDQSIPHPSTGEGGAAQVLIRPAAPGTGVIAGGAVRTVLELAGVKNVLAKRLGSKSPLNNARAALEALSSLRTFQEVAQSRDIPVEQLY.

The segment at 1-26 (MAEEKDKKQSSRRRNNRRTEKESEWQ) is disordered. Positions 17–26 (RRTEKESEWQ) are enriched in basic and acidic residues. Residues 25–88 (WQERVVQIRR…ADGKKHLVNV (64 aa)) form the S5 DRBM domain.

This sequence belongs to the universal ribosomal protein uS5 family. As to quaternary structure, part of the 30S ribosomal subunit. Contacts proteins S4 and S8.

With S4 and S12 plays an important role in translational accuracy. Functionally, located at the back of the 30S subunit body where it stabilizes the conformation of the head with respect to the body. In Synechococcus elongatus (strain ATCC 33912 / PCC 7942 / FACHB-805) (Anacystis nidulans R2), this protein is Small ribosomal subunit protein uS5.